Reading from the N-terminus, the 93-residue chain is Protein salt-induced and EIN3/EIL1-dependent 1 (93 aa).

The span at 23-36 (SSLLTESSSSSLCS) shows a compositional bias: low complexity. Residues 23-46 (SSLLTESSSSSLCSEEAEGGGGEA) are disordered.

With respect to regulation, triggered by EIN3. Functionally, involved in ethylene-dependent salt stress responses by reducing reactive oxygen species (ROS) accumulation. This is Protein salt-induced and EIN3/EIL1-dependent 1 from Arabidopsis thaliana (Mouse-ear cress).